The sequence spans 60 residues: Large ribosomal subunit protein bL32 (60 aa).

A compositionally biased stretch (basic residues) spans 1–16 (MAVPKKKTSKSRKNMR). Positions 1–20 (MAVPKKKTSKSRKNMRRAHD) are disordered.

It belongs to the bacterial ribosomal protein bL32 family.

This is Large ribosomal subunit protein bL32 from Geobacter metallireducens (strain ATCC 53774 / DSM 7210 / GS-15).